We begin with the raw amino-acid sequence, 231 residues long: Nucleoside diphosphate kinase II, chloroplastic (231 aa).

Residues Met1 to Arg62 constitute a chloroplast transit peptide. 6 residues coordinate ATP: Lys91, Phe139, Arg167, Thr173, Arg184, and Asn194. The active-site Pros-phosphohistidine intermediate is the His197.

It belongs to the NDK family. As to quaternary structure, interacts with PHYA, MPK3 and MPK6. Mg(2+) serves as cofactor. In terms of processing, autophosphorylated.

It localises to the plastid. Its subcellular location is the chloroplast. It catalyses the reaction a 2'-deoxyribonucleoside 5'-diphosphate + ATP = a 2'-deoxyribonucleoside 5'-triphosphate + ADP. It carries out the reaction a ribonucleoside 5'-diphosphate + ATP = a ribonucleoside 5'-triphosphate + ADP. Its function is as follows. Major role in the synthesis of nucleoside triphosphates other than ATP. The ATP gamma phosphate is transferred to the NDP beta phosphate via a ping-pong mechanism, using a phosphorylated active-site intermediate. May activate MPK3 and MPK6. May be involved in the regulation of cellular redox state and hydrogen peroxide-mediated MAP kinase signaling. The polypeptide is Nucleoside diphosphate kinase II, chloroplastic (NDPK2) (Arabidopsis thaliana (Mouse-ear cress)).